Here is a 128-residue protein sequence, read N- to C-terminus: Holo-[acyl-carrier-protein] synthase (128 aa).

Residues aspartate 8 and glutamate 59 each contribute to the Mg(2+) site.

Belongs to the P-Pant transferase superfamily. AcpS family. Mg(2+) is required as a cofactor.

Its subcellular location is the cytoplasm. The catalysed reaction is apo-[ACP] + CoA = holo-[ACP] + adenosine 3',5'-bisphosphate + H(+). Functionally, transfers the 4'-phosphopantetheine moiety from coenzyme A to a Ser of acyl-carrier-protein. The polypeptide is Holo-[acyl-carrier-protein] synthase (Rickettsia typhi (strain ATCC VR-144 / Wilmington)).